The primary structure comprises 442 residues: MGQPSIDLPSRLLRNLKPWLGASHWRIAFSGGLDSTVLLHLLAKLAKNQSIPALSAIHVHHGLQAAADAWPAHCQAVCEELAVPLQVQRVQVQPGASVERAARDARYAAFSAATQANDVLLTGQHRDDQAETLLFRLLRGAGVRGLSGMPATRALGQGSLVRPLLDVTRAELEAYARDHGLRWIEDPSNQDRQFSRNYLRHQIMPLLIGRWPQAHASMARSAAHLREAQGLLDELAQIDLTQASLPSEFEWSGLPSLEFAAIAKLSDARQRNALSHWLEPLTRLPDTDHWSGWVDVRDAGNDASPIWRLADGELHRSAGRLWWLSGEWLRTPVVSGDWHDLSSALRLPDNGRVMFSGQTPVGPLHIRYRQGGEVMDLAGRGHRDLKRLLNERAVPGFVRGRLPLLFRGEELLAVANLPGLDGNALEGWRLHWQPSDEDQGLR.

Residue 30-35 (SGGLDS) participates in ATP binding.

Belongs to the tRNA(Ile)-lysidine synthase family.

It localises to the cytoplasm. The catalysed reaction is cytidine(34) in tRNA(Ile2) + L-lysine + ATP = lysidine(34) in tRNA(Ile2) + AMP + diphosphate + H(+). Its function is as follows. Ligates lysine onto the cytidine present at position 34 of the AUA codon-specific tRNA(Ile) that contains the anticodon CAU, in an ATP-dependent manner. Cytidine is converted to lysidine, thus changing the amino acid specificity of the tRNA from methionine to isoleucine. This chain is tRNA(Ile)-lysidine synthase, found in Pseudomonas fluorescens (strain Pf0-1).